Reading from the N-terminus, the 212-residue chain is Octanoyltransferase (212 aa).

In terms of domain architecture, BPL/LPL catalytic spans 31 to 209; the sequence is AETQDEIWLV…HFADLLGYNI (179 aa). Substrate is bound by residues 70–77, 138–140, and 151–153; these read RGGQITYH, SLG, and GLA. Cys169 (acyl-thioester intermediate) is an active-site residue.

Belongs to the LipB family.

The protein resides in the cytoplasm. It carries out the reaction octanoyl-[ACP] + L-lysyl-[protein] = N(6)-octanoyl-L-lysyl-[protein] + holo-[ACP] + H(+). It participates in protein modification; protein lipoylation via endogenous pathway; protein N(6)-(lipoyl)lysine from octanoyl-[acyl-carrier-protein]: step 1/2. Functionally, catalyzes the transfer of endogenously produced octanoic acid from octanoyl-acyl-carrier-protein onto the lipoyl domains of lipoate-dependent enzymes. Lipoyl-ACP can also act as a substrate although octanoyl-ACP is likely to be the physiological substrate. The polypeptide is Octanoyltransferase (Haemophilus influenzae (strain PittEE)).